The chain runs to 738 residues: Exocyst complex component 3 (738 aa).

The stretch at 28-91 (LEKVEQYRHR…DEVERLLRGV (64 aa)) forms a coiled coil.

It belongs to the SEC6 family. In terms of assembly, the exocyst complex is composed of Sec3/Exoc1, Sec5/Exoc2, Sec6/Exoc3, Sec8/Exoc4, Sec10/Exoc5, Sec15/Exoc6, Exo70/Exoc7 and Exo84/Exoc8.

Functionally, component of the exocyst complex involved in the docking of exocytic vesicles with fusion sites on the plasma membrane. This chain is Exocyst complex component 3, found in Drosophila melanogaster (Fruit fly).